Here is a 216-residue protein sequence, read N- to C-terminus: NADH-quinone oxidoreductase subunit C (216 aa).

Belongs to the complex I 30 kDa subunit family. As to quaternary structure, NDH-1 is composed of 14 different subunits. Subunits NuoB, C, D, E, F, and G constitute the peripheral sector of the complex.

It is found in the cell inner membrane. The catalysed reaction is a quinone + NADH + 5 H(+)(in) = a quinol + NAD(+) + 4 H(+)(out). In terms of biological role, NDH-1 shuttles electrons from NADH, via FMN and iron-sulfur (Fe-S) centers, to quinones in the respiratory chain. The immediate electron acceptor for the enzyme in this species is believed to be ubiquinone. Couples the redox reaction to proton translocation (for every two electrons transferred, four hydrogen ions are translocated across the cytoplasmic membrane), and thus conserves the redox energy in a proton gradient. This Francisella tularensis subsp. tularensis (strain FSC 198) protein is NADH-quinone oxidoreductase subunit C.